We begin with the raw amino-acid sequence, 294 residues long: 2,2',3-trihydroxybiphenyl dioxygenase (294 aa).

VOC domains lie at 7-120 and 144-264; these read GYLI…LYVE and GLGH…LGFG. Positions 147, 209, and 260 each coordinate Fe cation.

Belongs to the extradiol ring-cleavage dioxygenase family. In terms of assembly, monomer. Requires Fe(2+) as cofactor.

The protein operates within xenobiotic degradation; dibenzo-p-dioxin degradation; 2-hydroxymuconate and catechol from dibenzo-p-dioxin: step 2/3. It participates in xenobiotic degradation; dibenzofuran degradation; 2-hydroxy-2,4-pentadienoate and salicylate from dibenzofuran: step 2/3. Its function is as follows. Responsible for meta-cleavage of the first aromatic ring of 2,2',3-trihydroxybiphenyl and 2,3-dihydroxybiphenyl. 2,2',3-trihydroxydiphenyl ether, catechol, 3-methylcatechol, and 4-methylcatechol are oxidized less efficiently and 3,4-dihydroxybiphenyl is oxidized considerably less efficiently. The polypeptide is 2,2',3-trihydroxybiphenyl dioxygenase (dbfB) (Sphingomonas paucimobilis (Pseudomonas paucimobilis)).